The sequence spans 119 residues: Ribonuclease P protein component (119 aa).

The protein belongs to the RnpA family. Consists of a catalytic RNA component (M1 or rnpB) and a protein subunit.

It carries out the reaction Endonucleolytic cleavage of RNA, removing 5'-extranucleotides from tRNA precursor.. RNaseP catalyzes the removal of the 5'-leader sequence from pre-tRNA to produce the mature 5'-terminus. It can also cleave other RNA substrates such as 4.5S RNA. The protein component plays an auxiliary but essential role in vivo by binding to the 5'-leader sequence and broadening the substrate specificity of the ribozyme. This chain is Ribonuclease P protein component, found in Edwardsiella ictaluri (strain 93-146).